The sequence spans 612 residues: RNA-binding protein MRN1 (612 aa).

Positions 1-28 (MVVSYNNNNNNNNNNNNNNISNNNNNNN) are enriched in low complexity. Disordered regions lie at residues 1–57 (MVVS…TYAS) and 105–125 (PTQFQTKQRNDSQQQRFSQEQ). Polar residues-rich tracts occupy residues 42–57 (YQQSSSSGPYQETYAS) and 115–125 (DSQQQRFSQEQ). RRM domains lie at 201–274 (RTVY…WGKP), 292–379 (RNVY…KTQQ), 431–504 (RTVY…WGKH), and 522–602 (RNVY…FGKD).

Its subcellular location is the cytoplasm. In terms of biological role, RNA-binding protein that binds specific categories of mRNAs, including those that contain upstream open reading frames (uORFs) and internal ribosome entry sites (IRES). Probably involved in translational regulation. In Saccharomyces cerevisiae (strain ATCC 204508 / S288c) (Baker's yeast), this protein is RNA-binding protein MRN1 (MRN1).